The following is a 297-amino-acid chain: MKTFLILALRAIVATTATIAVRVPVPQLQPQNPSQQQPQKQVPLVQQQQFPGQQQPFPPQQPYPQQQPFPSQQPYMQLQPFPQPQLPYPQPQLPYPQPQPFRPQQSYPQPQPQYSQPQQPISQQQQQQQQQQQQQQQILQQILQQQLIPCRDVVLQQHSIAHGSSQVLQQSTYQLVQQFCCQQLWQIPEQSRCQAIHNVVHAIILHQQQQQQQQQQQQQQQPLSQVCFQQSQQQYPSGQGSFQPSQQNPQAQGSVQPQQLPQFEEIRNLALETLPAMCNVYIPPYCTIAPVGIFGTN.

An N-terminal signal peptide occupies residues 1–20 (MKTFLILALRAIVATTATIA). Over residues 29–55 (QPQNPSQQQPQKQVPLVQQQQFPGQQQ) the composition is skewed to low complexity. Disordered stretches follow at residues 29-127 (QPQN…QQQQ) and 234-257 (QYPSGQGSFQPSQQNPQAQGSVQP). Residues 56 to 67 (PFPPQQPYPQQQ) show a composition bias toward pro residues. Positions 68–80 (PFPSQQPYMQLQP) are enriched in low complexity. A compositionally biased stretch (pro residues) spans 81–101 (FPQPQLPYPQPQLPYPQPQPF). 2 stretches are compositionally biased toward low complexity: residues 102 to 127 (RPQQSYPQPQPQYSQPQQPISQQQQQ) and 234 to 250 (QYPSGQGSFQPSQQNPQ).

Belongs to the gliadin/glutenin family. Post-translationally, substrate of transglutaminase.

Functionally, gliadin is the major seed storage protein in wheat. In Triticum aestivum (Wheat), this protein is Alpha/beta-gliadin A-IV.